The sequence spans 300 residues: MFYEFALIGTTASGKSSFSIELAKEIEAVILSLDSLCLYKNIDIASAKPNKNELSIIKHFGINLVYPDSHFCVGDFIKEYHKAKEFAISKNCPLIITGGSGFYLKSMLKGLSPKLEKIKIELNNDEIWSIAEKIDPNFTSKFSKNDEFRLHKWYQIYKLTNEIPTNWLVKNTSAPTIQNLKIYELNWDKEELKNRIKNRTKIMLNSGLIDEAKKLFTTYPKDIKALKSIGLKECGEYFEAKLGDIKSKEAILNLENLISIHTIQLAKKQRTFNSGAFKDRIILDTKSLKVKHFLDKYLNL.

Residue 9–16 (GTTASGKS) participates in ATP binding. 11 to 16 (TASGKS) provides a ligand contact to substrate. Positions 34-37 (DSLC) are interaction with substrate tRNA.

The protein belongs to the IPP transferase family. In terms of assembly, monomer. The cofactor is Mg(2+).

The catalysed reaction is adenosine(37) in tRNA + dimethylallyl diphosphate = N(6)-dimethylallyladenosine(37) in tRNA + diphosphate. In terms of biological role, catalyzes the transfer of a dimethylallyl group onto the adenine at position 37 in tRNAs that read codons beginning with uridine, leading to the formation of N6-(dimethylallyl)adenosine (i(6)A). This chain is tRNA dimethylallyltransferase, found in Campylobacter fetus subsp. fetus (strain 82-40).